Here is a 483-residue protein sequence, read N- to C-terminus: Glycogen synthase (483 aa).

Lys15 is a binding site for ADP-alpha-D-glucose.

The protein belongs to the glycosyltransferase 1 family. Bacterial/plant glycogen synthase subfamily.

It carries out the reaction [(1-&gt;4)-alpha-D-glucosyl](n) + ADP-alpha-D-glucose = [(1-&gt;4)-alpha-D-glucosyl](n+1) + ADP + H(+). The protein operates within glycan biosynthesis; glycogen biosynthesis. Synthesizes alpha-1,4-glucan chains using ADP-glucose. The chain is Glycogen synthase from Alkalilimnicola ehrlichii (strain ATCC BAA-1101 / DSM 17681 / MLHE-1).